We begin with the raw amino-acid sequence, 274 residues long: Formamidopyrimidine-DNA glycosylase (274 aa).

Pro2 functions as the Schiff-base intermediate with DNA in the catalytic mechanism. The active-site Proton donor is Glu3. Lys57 functions as the Proton donor; for beta-elimination activity in the catalytic mechanism. The DNA site is built by His92, Arg111, and Lys152. Residues 237-271 (QVYGRKGEECRECGTLIQAKVIGQRNSYFCPDCQP) form an FPG-type zinc finger. The active-site Proton donor; for delta-elimination activity is Arg261.

This sequence belongs to the FPG family. Monomer. Zn(2+) serves as cofactor.

It catalyses the reaction Hydrolysis of DNA containing ring-opened 7-methylguanine residues, releasing 2,6-diamino-4-hydroxy-5-(N-methyl)formamidopyrimidine.. The catalysed reaction is 2'-deoxyribonucleotide-(2'-deoxyribose 5'-phosphate)-2'-deoxyribonucleotide-DNA = a 3'-end 2'-deoxyribonucleotide-(2,3-dehydro-2,3-deoxyribose 5'-phosphate)-DNA + a 5'-end 5'-phospho-2'-deoxyribonucleoside-DNA + H(+). Its function is as follows. Involved in base excision repair of DNA damaged by oxidation or by mutagenic agents. Acts as a DNA glycosylase that recognizes and removes damaged bases. Has a preference for oxidized purines, such as 7,8-dihydro-8-oxoguanine (8-oxoG). Has AP (apurinic/apyrimidinic) lyase activity and introduces nicks in the DNA strand. Cleaves the DNA backbone by beta-delta elimination to generate a single-strand break at the site of the removed base with both 3'- and 5'-phosphates. In Haemophilus ducreyi (strain 35000HP / ATCC 700724), this protein is Formamidopyrimidine-DNA glycosylase.